The sequence spans 183 residues: Outer membrane protein H.8 (183 aa).

Positions 1 to 17 (MKAYLALISAAVIGLAA) are cleaved as a signal peptide. Residue Cys-18 is the site of N-palmitoyl cysteine attachment. Cys-18 is lipidated: S-diacylglycerol cysteine. The tract at residues 27–51 (AEATPAAEAPASEAPAAEAAPADAA) is disordered. The region spanning 57–183 (GNCAATVESN…LMNGKVTLVD (127 aa)) is the Plastocyanin-like domain. His-102, Cys-166, His-171, and Met-175 together coordinate Cu cation.

It depends on Cu cation as a cofactor.

The protein localises to the cell outer membrane. This Neisseria meningitidis serogroup B (strain ATCC BAA-335 / MC58) protein is Outer membrane protein H.8.